The sequence spans 599 residues: Riboflavin biosynthesis protein PYRR, chloroplastic (599 aa).

The N-terminal 17 residues, 1 to 17 (MALSFRISSSSPLICRA), are a transit peptide targeting the chloroplast. A CMP/dCMP-type deaminase domain is found at 30–152 (TTDAAFIRRA…ELRSHGIEVN (123 aa)).

This sequence in the C-terminal section; belongs to the YbiA family.

Its subcellular location is the plastid. The protein resides in the chloroplast. It carries out the reaction 5-amino-6-(5-phospho-D-ribitylamino)uracil + NADP(+) = 5-amino-6-(5-phospho-D-ribosylamino)uracil + NADPH + H(+). It catalyses the reaction 2,5-diamino-6-hydroxy-4-(5-phosphoribosylamino)-pyrimidine + H2O = 2,5,6-triamino-4-hydroxypyrimidine + D-ribose 5-phosphate. The catalysed reaction is 5-amino-6-(5-phospho-D-ribosylamino)uracil + H2O = 5,6-diaminouracil + D-ribose 5-phosphate. The protein operates within cofactor biosynthesis; riboflavin biosynthesis; 5-amino-6-(D-ribitylamino)uracil from GTP: step 3/4. Pyrimidine reductase involved in the riboflavin biosynthesis pathway. Also has a non-functional N-terminal deaminase domain that lacks the catalytically essential zinc-binding residues. In terms of biological role, catalyzes the hydrolysis of the N-glycosidic bond in the first two intermediates of riboflavin biosynthesis, which are highly reactive metabolites, yielding relatively innocuous products. Thus, can divert a surplus of harmful intermediates into relatively harmless products and pre-empt the damage these intermediates would otherwise do. Helps maintain flavin levels. Has no activity against GTP, nucleoside monophosphates or ADP-ribose. The sequence is that of Riboflavin biosynthesis protein PYRR, chloroplastic (PYRR) from Arabidopsis thaliana (Mouse-ear cress).